A 434-amino-acid polypeptide reads, in one-letter code: 3-phosphoshikimate 1-carboxyvinyltransferase (434 aa).

K22, S23, and R27 together coordinate 3-phosphoshikimate. K22 contacts phosphoenolpyruvate. Phosphoenolpyruvate contacts are provided by G93 and R121. Positions 168, 169, 170, 199, 320, and 347 each coordinate 3-phosphoshikimate. Q170 contacts phosphoenolpyruvate. D320 acts as the Proton acceptor in catalysis. The phosphoenolpyruvate site is built by R351, R394, and K419.

The protein belongs to the EPSP synthase family. In terms of assembly, monomer.

The protein resides in the cytoplasm. The catalysed reaction is 3-phosphoshikimate + phosphoenolpyruvate = 5-O-(1-carboxyvinyl)-3-phosphoshikimate + phosphate. It participates in metabolic intermediate biosynthesis; chorismate biosynthesis; chorismate from D-erythrose 4-phosphate and phosphoenolpyruvate: step 6/7. Functionally, catalyzes the transfer of the enolpyruvyl moiety of phosphoenolpyruvate (PEP) to the 5-hydroxyl of shikimate-3-phosphate (S3P) to produce enolpyruvyl shikimate-3-phosphate and inorganic phosphate. In Burkholderia cenocepacia (strain ATCC BAA-245 / DSM 16553 / LMG 16656 / NCTC 13227 / J2315 / CF5610) (Burkholderia cepacia (strain J2315)), this protein is 3-phosphoshikimate 1-carboxyvinyltransferase.